A 341-amino-acid chain; its full sequence is HTH-type transcriptional repressor PurR (341 aa).

The HTH lacI-type domain maps to 2–56 (ATIKDVAKRAGVSTTTVSHVINKTRFVAENTRAAVWAAIKELNYSPSAVARSLKV). Positions 4-23 (IKDVAKRAGVSTTTVSHVIN) form a DNA-binding region, H-T-H motif. Residues 48 to 56 (SAVARSLKV) mediate DNA binding. Hypoxanthine contacts are provided by Tyr73, Arg190, Thr192, Phe221, and Asp275.

As to quaternary structure, homodimer.

Its pathway is purine metabolism; purine nucleotide biosynthesis [regulation]. Functionally, is the main repressor of the genes involved in the de novo synthesis of purine nucleotides, regulating purB, purC, purEK, purF, purHD, purL, purMN and guaBA expression. PurR is allosterically activated to bind its cognate DNA by binding the purine corepressors, hypoxanthine or guanine, thereby effecting transcription repression. The chain is HTH-type transcriptional repressor PurR from Proteus mirabilis (strain HI4320).